Reading from the N-terminus, the 2000-residue chain is Sodium channel protein type 3 subunit alpha (2000 aa).

Residues 1–128 (MAQALLVPPG…KIAIKILVHS (128 aa)) lie on the Cytoplasmic side of the membrane. The interval 28–60 (RAAEEKAKKPKKEQDNDDENKPKPNSDLEAGKN) is disordered. Over residues 46–57 (ENKPKPNSDLEA) the composition is skewed to basic and acidic residues. One copy of the I repeat lies at 110–455 (ILTPLNPVRK…QQMLEQLKKQ (346 aa)). The helical transmembrane segment at 129-146 (LFSMLIMCTILTNCVFMT) threads the bilayer. The Extracellular segment spans residues 147–152 (LSNPPD). The chain crosses the membrane as a helical span at residues 153–174 (WTKNVEYTFTGIYTFESLIKIL). Residues 175–188 (ARGFCLEDFTFLRD) lie on the Cytoplasmic side of the membrane. A helical transmembrane segment spans residues 189-206 (PWNWLDFSVIVMAYVTEF). Topologically, residues 207 to 213 (VSLGNVS) are extracellular. Residue asparagine 211 is glycosylated (N-linked (GlcNAc...) asparagine). Residues 214–235 (ALRTFRVLRALKTISVIPGLKT) form a helical membrane-spanning segment. The Cytoplasmic segment spans residues 236-249 (IVGALIQSVKKLSD). A helical transmembrane segment spans residues 250–269 (VMILTVFCLSVFALIGLQLF). The Extracellular segment spans residues 270-369 (MGNLRNKCLQ…NYGYTSFDTF (100 aa)). N-linked (GlcNAc...) asparagine glycans are attached at residues asparagine 290, asparagine 296, asparagine 302, asparagine 307, and asparagine 339. Positions 370-386 (SWAFLSLFRLMTQDYWE) form an intramembrane region, pore-forming. At 387 to 397 (NLYQLTLRAAG) the chain is on the extracellular side. Residues 398 to 424 (KTYMIFFVLVIFLGSFYLVNLILAVVA) traverse the membrane as a helical segment. Residues 425–761 (MAYEEQNQAT…LVNLIVMDPF (337 aa)) lie on the Cytoplasmic side of the membrane. 3 positions are modified to phosphoserine: serine 484, serine 485, and serine 486. Disordered stretches follow at residues 493-528 (SKSAKEWRNRRKKRRQREHLEGNNKGERDSFPKSES), 587-631 (VGSE…ASMS), and 662-681 (ALTSPTGQLPPEGTTTETEV). Over residues 500-509 (RNRRKKRRQR) the composition is skewed to basic residues. 2 stretches are compositionally biased toward basic and acidic residues: residues 510–528 (EHLEGNNKGERDSFPKSES) and 596–610 (DEHSTFEDSESRRDS). Positions 662 to 678 (ALTSPTGQLPPEGTTTE) are enriched in polar residues. An II repeat occupies 742–1014 (CCDAWLKVKH…QIAVGRMQKG (273 aa)). A helical membrane pass occupies residues 762–779 (VDLAITICIVLNTLFMAM). Residues 780–787 (EHYPMTEQ) lie on the Extracellular side of the membrane. A helical transmembrane segment spans residues 788 to 812 (FSSVLTVGNLVFTGIFTAEMVLKII). Over 813–822 (AMDPYYYFQE) the chain is Cytoplasmic. Residues 823–842 (GWNIFDGIIVSLSLMELGLS) form a helical membrane-spanning segment. At 843 to 846 (NVEG) the chain is on the extracellular side. Residues 847–865 (LSVLRSFRLLRVFKLAKSW) traverse the membrane as a helical segment. The Cytoplasmic segment spans residues 866–883 (PTLNMLIKIIGNSVGALG). The chain crosses the membrane as a helical span at residues 884–904 (NLTLVLAIIVFIFAVVGMQLF). The Extracellular portion of the chain corresponds to 905 to 929 (GKSYKECVCKINDDCTLPRWHMNDF). A disulfide bond links cysteine 913 and cysteine 919. The pore-forming intramembrane region spans 930-945 (FHSFLIVFRVLCGEWI). The Extracellular segment spans residues 946-956 (ETMWDCMEVAG). Residues cysteine 951 and cysteine 960 are joined by a disulfide bond. A helical transmembrane segment spans residues 957 to 983 (QTMCLIVFMLVMVIGNLVVLNLFLALL). Over 984-1205 (LSSFSSDNLA…RKTCYSIVEH (222 aa)) the chain is Cytoplasmic. A disordered region spans residues 1118–1162 (EEFSSESELEESKEKLNATSSSEGSTVDVVLPREGEQAETEPEED). The III repeat unit spans residues 1188–1499 (KGKIWWNLRK…KKYYNAMKKL (312 aa)). A helical membrane pass occupies residues 1206 to 1226 (NWFETFIVFMILLSSGALAFE). Residues 1227 to 1238 (DIYIEQRKTIKT) are Extracellular-facing. A helical membrane pass occupies residues 1239–1260 (MLEYADKVFTYIFILEMLLKWV). Topologically, residues 1261–1266 (AYGFQT) are cytoplasmic. Residues 1267-1292 (YFTNAWCWLDFLIVDVSLVSLVANAL) traverse the membrane as a helical segment. Topologically, residues 1293 to 1301 (GYSELGAIK) are extracellular. A helical transmembrane segment spans residues 1302–1320 (SLRTLRALRPLRALSRFEG). Residues 1321–1333 (MRVVVNALVGAIP) lie on the Cytoplasmic side of the membrane. A helical membrane pass occupies residues 1334–1356 (SIMNVLLVCLIFWLIFSIMGVNL). The Extracellular segment spans residues 1357–1402 (FAGKFYHCVNMTTGNMFDISDVNNLSDCQALGKQARWKNVKVNFDN). An intrachain disulfide couples cysteine 1364 to cysteine 1384. Residues asparagine 1366 and asparagine 1380 are each glycosylated (N-linked (GlcNAc...) asparagine). Positions 1403 to 1419 (VGAGYLALLQVATFKGW) form an intramembrane region, pore-forming. The Extracellular segment spans residues 1420-1442 (MDIMYAAVDSRDVKLQPVYEENL). A helical membrane pass occupies residues 1443-1468 (YMYLYFVIFIIFGSFFTLNLFIGVII). Residues 1469–1526 (DNFNQQKKKFGGQDIFMTEEQKKYYNAMKKLGSKKPQKPIPRPANKFQGMVFDFVTRQ) are Cytoplasmic-facing. The residue at position 1501 (serine 1501) is a Phosphoserine; by PKC. The IV repeat unit spans residues 1508–1806 (IPRPANKFQG…WEKFDPDATQ (299 aa)). A helical membrane pass occupies residues 1527–1545 (VFDISIMILICLNMVTMMV). Residues 1546 to 1553 (ETDDQGKY) are Extracellular-facing. The chain crosses the membrane as a helical span at residues 1554–1577 (MTLVLSRINLVFIVLFTGEFVLKL). Over 1578-1587 (VSLRHYYFTI) the chain is Cytoplasmic. A helical membrane pass occupies residues 1588-1605 (GWNIFDFVVVILSIVGMF). The Extracellular segment spans residues 1606–1617 (LAEMIEKYFVSP). The helical transmembrane segment at 1618–1640 (TLFRVIRLARIGRILRLIKGAKG) threads the bilayer. Over 1641-1653 (IRTLLFALMMSLP) the chain is Cytoplasmic. A helical transmembrane segment spans residues 1654–1677 (ALFNIGLLLFLVMFIYAIFGMSNF). The Extracellular portion of the chain corresponds to 1678–1699 (AYVKKEAGIDDMFNFETFGNSM). An intramembrane region (pore-forming) is located at residues 1700–1712 (ICLFQITTSAGWD). Topologically, residues 1713-1744 (GLLAPILNSAPPDCDPDTIHPGSSVKGDCGNP) are extracellular. The helical transmembrane segment at 1745–1770 (SVGIFFFVSYIIISFLVVVNMYIAVI) threads the bilayer. The Cytoplasmic portion of the chain corresponds to 1771-2000 (LENFSVATEE…KGKEVRENQK (230 aa)). Positions 1900-1929 (EEVSAAIIQRNFRCYLLKQRLKNISSNYNK) constitute an IQ domain. Residues 1949–2000 (LNGNSTPEKTDGSSSTTSPPSYDSVTKPDKEKFEKDKPEKESKGKEVRENQK) form a disordered region. Over residues 1974–2000 (TKPDKEKFEKDKPEKESKGKEVRENQK) the composition is skewed to basic and acidic residues.

This sequence belongs to the sodium channel (TC 1.A.1.10) family. Nav1.3/SCN3A subfamily. Heterooligomer of an alpha subunit, SCN3A, and 1 to 3 regulatory beta subunits including SCN1B and SCN2B; disulfide-linked with some beta subunits like SCN2B. Interacts with NEDD4L; could regulate expression of SCN3A at the plasma membrane through ubiquitination-regulated endocytosis. Interacts with the conotoxin GVIIJ. In terms of processing, may be ubiquitinated by NEDD4L; which would promote its endocytosis. Phosphorylation at Ser-1501 by PKC in a highly conserved cytoplasmic loop slows inactivation of the sodium channel and reduces peak sodium currents. In terms of tissue distribution, expressed in enterochromaffin cells in both colon and small bowel (at protein level).

Its subcellular location is the cell membrane. It is found in the basal cell membrane. The enzyme catalyses Na(+)(in) = Na(+)(out). Pore-forming subunit of Nav1.3, a voltage-gated sodium (Nav) channel that directly mediates the depolarizing phase of action potentials in excitable membranes. Navs, also called VGSCs (voltage-gated sodium channels) or VDSCs (voltage-dependent sodium channels), operate by switching between closed and open conformations depending on the voltage difference across the membrane. In the open conformation they allow Na(+) ions to selectively pass through the pore, along their electrochemical gradient. The influx of Na+ ions provokes membrane depolarization, initiating the propagation of electrical signals throughout cells and tissues. In some secretory cell types, it also participates in cell excitability through membrane depolarization and regulates cells responsiveness to stimuli triggering secretion. For instance, it controls the release of serotonin/5-hydroxytryptamine by enterochromaffin cells and is required for both glucagon- and glucose-induced insulin secretion in pancreatic endocrine cells. The polypeptide is Sodium channel protein type 3 subunit alpha (Homo sapiens (Human)).